We begin with the raw amino-acid sequence, 649 residues long: ATP-dependent zinc metalloprotease FtsH (649 aa).

Topologically, residues 1–18 are cytoplasmic; the sequence is MQCSYPLARQLERSSALN. A helical transmembrane segment spans residues 19–39; sequence NNLFQKAAIWLVIALVLFTVF. Topologically, residues 40–115 are periplasmic; it reads KQFDKPRAQD…VTGKADDEPN (76 aa). A helical membrane pass occupies residues 116-136; it reads VLVQALYYLGPTLLIIVFWFY. The Cytoplasmic segment spans residues 137-649; sequence MMRQMQGGGK…PATARADETV (513 aa). 210-217 contacts ATP; the sequence is GPPGTGKT. Zn(2+) is bound at residue H432. E433 is a catalytic residue. The Zn(2+) site is built by H436 and D508. The interval 606–649 is disordered; the sequence is IMAGRPPRPPRGAQGPNSGGNTPPGGSPVAPTNAPATARADETV. Positions 616–626 are enriched in low complexity; it reads RGAQGPNSGGN.

In the central section; belongs to the AAA ATPase family. The protein in the C-terminal section; belongs to the peptidase M41 family. As to quaternary structure, homohexamer. Requires Zn(2+) as cofactor.

The protein resides in the cell inner membrane. In terms of biological role, acts as a processive, ATP-dependent zinc metallopeptidase for both cytoplasmic and membrane proteins. Plays a role in the quality control of integral membrane proteins. The protein is ATP-dependent zinc metalloprotease FtsH of Cupriavidus metallidurans (strain ATCC 43123 / DSM 2839 / NBRC 102507 / CH34) (Ralstonia metallidurans).